An 89-amino-acid chain; its full sequence is Small ribosomal subunit protein uS17 (89 aa).

This sequence belongs to the universal ribosomal protein uS17 family. As to quaternary structure, part of the 30S ribosomal subunit.

Its function is as follows. One of the primary rRNA binding proteins, it binds specifically to the 5'-end of 16S ribosomal RNA. This chain is Small ribosomal subunit protein uS17, found in Polaromonas sp. (strain JS666 / ATCC BAA-500).